Consider the following 487-residue polypeptide: Serine/threonine-protein kinase 4 (487 aa).

At Met-1 the chain carries N-acetylmethionine. Residue Thr-3 is modified to Phosphothreonine. The 252-residue stretch at 30-281 (FDVLEKLGEG…ATQLLQHPFV (252 aa)) folds into the Protein kinase domain. ATP-binding positions include 36–44 (LGEGSYGSV) and Lys-59. Asp-149 functions as the Proton acceptor in the catalytic mechanism. Position 183 is a phosphothreonine; by autocatalysis (Thr-183). A Phosphoserine modification is found at Ser-265. Residues 290–310 (LRDLINEAMDVKLKRQEAQQR) are a coiled coil. The interval 305–338 (QEAQQREVDQDDEENSEEDELDSGTMVRAVGDDM) is disordered. Positions 313–326 (DQDDEENSEEDELD) are enriched in acidic residues. At Ser-320 the chain carries Phosphoserine. 2 positions are modified to phosphothreonine: Thr-340 and Thr-367. At Thr-387 the chain carries Phosphothreonine; by PKB/AKT1. 2 positions are modified to phosphoserine: Ser-410 and Ser-414. Tyr-433 carries the post-translational modification Phosphotyrosine. The SARAH domain maps to 433-480 (YEFLKSWTVEDLQKRLLALDPMMEQEIEEIRQKYQSKRQPILDAIEAK).

It belongs to the protein kinase superfamily. STE Ser/Thr protein kinase family. STE20 subfamily. As to quaternary structure, homodimer; mediated via the coiled-coil region. Interacts with NORE1, which inhibits autoactivation. Interacts with and stabilizes SAV1. Interacts with RASSF1. Interacts with FOXO3. Interacts with RASSF2 (via SARAH domain). Interacts with AR, PKB/AKT1, TNNI3 and SIRT1. Interacts with DLG5 (via PDZ domain 3). Interacts with MARK3 and SCRIB in the presence of DLG5. Mg(2+) serves as cofactor. Autophosphorylated on serine and threonine residues. Phosphorylation at Thr-387 by PKB/AKT1, leads to inhibition of its: kinase activity, nuclear translocation and autophosphorylation at Thr-183. It also diminishes its cleavage by caspases and its ability to phosphorylate FOXO3. Post-translationally, proteolytically cleaved by caspase-3 during apoptosis at Asp-326 and Asp-349 resulting in a 37 kDa or a 39 kDa subunit respectively. The 39 kDa subunit is further cleaved into the 37 kDa form. Proteolytic cleavage results in kinase activation and nuclear translocation of the truncated form (MST1/N). It is less likely that cleavage at Asp-349 is a prerequisite for activation as this site is not conserved in the murine ortholog.

It localises to the cytoplasm. The protein resides in the nucleus. The enzyme catalyses L-seryl-[protein] + ATP = O-phospho-L-seryl-[protein] + ADP + H(+). It catalyses the reaction L-threonyl-[protein] + ATP = O-phospho-L-threonyl-[protein] + ADP + H(+). With respect to regulation, inhibited by the C-terminal non-catalytic region. Activated by caspase-cleavage. Full activation also requires homodimerization and autophosphorylation of Thr-183. Activated by RASSF1 which acts by preventing its dephosphorylation. Its function is as follows. Stress-activated, pro-apoptotic kinase which, following caspase-cleavage, enters the nucleus and induces chromatin condensation followed by internucleosomal DNA fragmentation. Key component of the Hippo signaling pathway which plays a pivotal role in organ size control and tumor suppression by restricting proliferation and promoting apoptosis. The core of this pathway is composed of a kinase cascade wherein STK3/MST2 and STK4/MST1, in complex with its regulatory protein SAV1, phosphorylates and activates LATS1/2 in complex with its regulatory protein MOB1, which in turn phosphorylates and inactivates YAP1 oncoprotein and WWTR1/TAZ. Phosphorylation of YAP1 by LATS2 inhibits its translocation into the nucleus to regulate cellular genes important for cell proliferation, cell death, and cell migration. STK3/MST2 and STK4/MST1 are required to repress proliferation of mature hepatocytes, to prevent activation of facultative adult liver stem cells (oval cells), and to inhibit tumor formation. Phosphorylates 'Ser-14' of histone H2B (H2BS14ph) during apoptosis. Phosphorylates FOXO3 upon oxidative stress, which results in its nuclear translocation and cell death initiation. Phosphorylates MOBKL1A, MOBKL1B and RASSF2. Phosphorylates TNNI3 (cardiac Tn-I) and alters its binding affinity to TNNC1 (cardiac Tn-C) and TNNT2 (cardiac Tn-T). Phosphorylates FOXO1 on 'Ser-212' and regulates its activation and stimulates transcription of PMAIP1 in a FOXO1-dependent manner. Phosphorylates SIRT1 and inhibits SIRT1-mediated p53/TP53 deacetylation, thereby promoting p53/TP53 dependent transcription and apoptosis upon DNA damage. Acts as an inhibitor of PKB/AKT1. Phosphorylates AR on 'Ser-650' and suppresses its activity by intersecting with PKB/AKT1 signaling and antagonizing formation of AR-chromatin complexes. The protein is Serine/threonine-protein kinase 4 (STK4) of Lemur catta (Ring-tailed lemur).